The sequence spans 942 residues: UvrABC system protein A (942 aa).

31-38 (GLSGSGKS) serves as a coordination point for ATP. The C4-type zinc finger occupies 253–280 (CSECGYSLPELEPRLFSFNNPAGACPTC). 2 ABC transporter domains span residues 310–586 (WDRR…EASI) and 606–936 (YDAN…RFLT). 639–646 (GVSGSGKS) is a binding site for ATP. The C4-type zinc-finger motif lies at 739–765 (CEACQGDGVIKVEMHFLPDVYVPCDHC).

Belongs to the ABC transporter superfamily. UvrA family. As to quaternary structure, forms a heterotetramer with UvrB during the search for lesions.

It localises to the cytoplasm. In terms of biological role, the UvrABC repair system catalyzes the recognition and processing of DNA lesions. UvrA is an ATPase and a DNA-binding protein. A damage recognition complex composed of 2 UvrA and 2 UvrB subunits scans DNA for abnormalities. When the presence of a lesion has been verified by UvrB, the UvrA molecules dissociate. The polypeptide is UvrABC system protein A (Haemophilus ducreyi (strain 35000HP / ATCC 700724)).